The sequence spans 148 residues: SsrA-binding protein (148 aa).

It belongs to the SmpB family.

It localises to the cytoplasm. Functionally, required for rescue of stalled ribosomes mediated by trans-translation. Binds to transfer-messenger RNA (tmRNA), required for stable association of tmRNA with ribosomes. tmRNA and SmpB together mimic tRNA shape, replacing the anticodon stem-loop with SmpB. tmRNA is encoded by the ssrA gene; the 2 termini fold to resemble tRNA(Ala) and it encodes a 'tag peptide', a short internal open reading frame. During trans-translation Ala-aminoacylated tmRNA acts like a tRNA, entering the A-site of stalled ribosomes, displacing the stalled mRNA. The ribosome then switches to translate the ORF on the tmRNA; the nascent peptide is terminated with the 'tag peptide' encoded by the tmRNA and targeted for degradation. The ribosome is freed to recommence translation, which seems to be the essential function of trans-translation. The chain is SsrA-binding protein from Azoarcus sp. (strain BH72).